We begin with the raw amino-acid sequence, 102 residues long: Small ribosomal subunit protein uS10 (102 aa).

Belongs to the universal ribosomal protein uS10 family. In terms of assembly, part of the 30S ribosomal subunit.

Involved in the binding of tRNA to the ribosomes. The protein is Small ribosomal subunit protein uS10 of Methanococcus maripaludis (strain C6 / ATCC BAA-1332).